We begin with the raw amino-acid sequence, 775 residues long: Armadillo-like helical domain-containing protein 4 (775 aa).

The first 47 residues, methionine 1–alanine 47, serve as a signal peptide directing secretion. Residues phenylalanine 48–methionine 715 lie on the Extracellular side of the membrane. An N-linked (GlcNAc...) asparagine glycan is attached at asparagine 76. Disordered regions lie at residues alanine 120–serine 148, valine 247–serine 273, and lysine 324–threonine 366. The span at glycine 129–glutamate 142 shows a compositional bias: polar residues. The span at lysine 324 to glutamate 335 shows a compositional bias: basic and acidic residues. N-linked (GlcNAc...) asparagine glycosylation occurs at asparagine 476. A disordered region spans residues isoleucine 559 to isoleucine 669. The segment covering threonine 577–alanine 599 has biased composition (polar residues). Residues leucine 606–glutamate 640 show a composition bias toward acidic residues. A helical membrane pass occupies residues leucine 716–isoleucine 736. At lysine 737 to phenylalanine 775 the chain is on the cytoplasmic side. 2 positions are modified to phosphoserine: serine 770 and serine 771.

In terms of assembly, interacts with IL6ST; this interaction prevents IL6ST protein homodimerization and bridges ARMH4 with IL6R and STAT3 and therefore inhibits phosphorylation of STAT3 at 'Tyr-705'. Interacts (via cytoplasmic tail) with RICTOR; this interaction bridges ARMH4 to the mTORC2 complex and inhibits the mTORC2 kinase activity. As to expression, expressed in bone-marroew cells.

It is found in the membrane. Its function is as follows. May modulate immune response and may play a role in inflammation. Down-modulates STAT3 signaling throught direct interaction with IL6ST, resulting in the inhibition of phosphorylation of STAT3 at 'Tyr-705'. May negatively regulates AKT signaling by modulating the activity of mTORC2 complex through RICTOR interaction. The chain is Armadillo-like helical domain-containing protein 4 from Mus musculus (Mouse).